The chain runs to 170 residues: Crossover junction endodeoxyribonuclease RuvC (170 aa).

Catalysis depends on residues aspartate 12, glutamate 72, and aspartate 144. Aspartate 12, glutamate 72, and aspartate 144 together coordinate Mg(2+).

It belongs to the RuvC family. Homodimer which binds Holliday junction (HJ) DNA. The HJ becomes 2-fold symmetrical on binding to RuvC with unstacked arms; it has a different conformation from HJ DNA in complex with RuvA. In the full resolvosome a probable DNA-RuvA(4)-RuvB(12)-RuvC(2) complex forms which resolves the HJ. Mg(2+) serves as cofactor.

The protein localises to the cytoplasm. It catalyses the reaction Endonucleolytic cleavage at a junction such as a reciprocal single-stranded crossover between two homologous DNA duplexes (Holliday junction).. The RuvA-RuvB-RuvC complex processes Holliday junction (HJ) DNA during genetic recombination and DNA repair. Endonuclease that resolves HJ intermediates. Cleaves cruciform DNA by making single-stranded nicks across the HJ at symmetrical positions within the homologous arms, yielding a 5'-phosphate and a 3'-hydroxyl group; requires a central core of homology in the junction. The consensus cleavage sequence is 5'-(A/T)TT(C/G)-3'. Cleavage occurs on the 3'-side of the TT dinucleotide at the point of strand exchange. HJ branch migration catalyzed by RuvA-RuvB allows RuvC to scan DNA until it finds its consensus sequence, where it cleaves and resolves the cruciform DNA. This chain is Crossover junction endodeoxyribonuclease RuvC, found in Nitrobacter hamburgensis (strain DSM 10229 / NCIMB 13809 / X14).